Reading from the N-terminus, the 192-residue chain is Protein GrpE (192 aa).

A disordered region spans residues 1–41; that stretch reads MSKEEFPHEKDLKDEVTPDKAPKKDPKAAPKEEVKENPVEN.

It belongs to the GrpE family. Homodimer.

The protein resides in the cytoplasm. Functionally, participates actively in the response to hyperosmotic and heat shock by preventing the aggregation of stress-denatured proteins, in association with DnaK and GrpE. It is the nucleotide exchange factor for DnaK and may function as a thermosensor. Unfolded proteins bind initially to DnaJ; upon interaction with the DnaJ-bound protein, DnaK hydrolyzes its bound ATP, resulting in the formation of a stable complex. GrpE releases ADP from DnaK; ATP binding to DnaK triggers the release of the substrate protein, thus completing the reaction cycle. Several rounds of ATP-dependent interactions between DnaJ, DnaK and GrpE are required for fully efficient folding. This Lactobacillus johnsonii (strain CNCM I-12250 / La1 / NCC 533) protein is Protein GrpE.